The sequence spans 723 residues: Bifunctional lysine-specific demethylase and histidyl-hydroxylase NO66 (723 aa).

Disordered stretches follow at residues 13 to 34 and 48 to 213; these read KKTAKKPAKKTTKQNRQKQKAA and SAVK…APSC. Residues 14–31 show a composition bias toward basic residues; it reads KTAKKPAKKTTKQNRQKQ. Low complexity predominate over residues 49 to 72; that stretch reads AVKQNNGAKGKAKANGVKGNAKAQ. Composition is skewed to acidic residues over residues 88–106 and 114–129; these read ESVDDYSSDSSYDEDEDNE and EDDYGSELSSGEEFEE. Residues 133–155 show a composition bias toward low complexity; the sequence is NSPSGSCSCSASSGSSNTENSPP. A compositionally biased stretch (basic and acidic residues) spans 190–199; that stretch reads EQKEGKELSK. Low complexity predominate over residues 204-213; the sequence is KSAPAAAPSC. A JmjC domain is found at 379–518; it reads NPSTYLKGLR…NLMEALMPAV (140 aa). Fe cation-binding residues include H419, D421, and H484.

The protein belongs to the ROX family. NO66 subfamily. It depends on Fe(2+) as a cofactor.

The protein resides in the nucleus. It catalyses the reaction N(6),N(6)-dimethyl-L-lysyl(36)-[histone H3] + 2 2-oxoglutarate + 2 O2 = L-lysyl(36)-[histone H3] + 2 formaldehyde + 2 succinate + 2 CO2. Oxygenase that can act as both a histone lysine demethylase and a ribosomal histidine hydroxylase. Specifically demethylates 'Lys-4' (H3K4me) and 'Lys-36' (H3K36me) of histone H3, thereby playing a central role in histone code. The sequence is that of Bifunctional lysine-specific demethylase and histidyl-hydroxylase NO66 from Drosophila grimshawi (Hawaiian fruit fly).